Here is a 1430-residue protein sequence, read N- to C-terminus: Target of rapamycin complex 2 subunit TSC11 (1430 aa).

Residues 1 to 62 are disordered; the sequence is MSIPHSAKQS…TITNESSKRN (62 aa). 2 stretches are compositionally biased toward polar residues: residues 7–26 and 35–44; these read AKQS…TTPL and NSSTQISSAK. Ser-19 carries the post-translational modification Phosphoserine. Low complexity predominate over residues 45-57; that stretch reads NITSSSPSTITNE. Ser-81, Ser-84, Ser-87, and Ser-141 each carry phosphoserine. Positions 91-180 form a coiled coil; sequence ARRTRSTMTK…EKHIFDLKQQ (90 aa). Positions 182 to 285 are disordered; sequence DKKRQRSLTT…NLTGDTEKDL (104 aa). Residues 233–265 are compositionally biased toward polar residues; that stretch reads TTPTSGTERNSQQNLNRNSTVNSRNNENHSTLS. The 106-residue stretch at 995–1100 folds into the N-terminal Ras-GEF domain; sequence SVVAVADQAL…FQQKSRLPLH (106 aa).

The protein belongs to the RICTOR family. In terms of assembly, the target of rapamycin complex 2 (TORC2) is composed of at least AVO1, AVO2, BIT61, LST8, TOR2 and TSC11. TORC2 forms a homodimer. Contrary to TORC1, TORC2 does not bind to and is not sensitive to FKBP-rapamycin. TSC11 binds to the N-terminal HEAT repeat region in TOR2 and is required for TORC2 integrity by tethering AVO1 and AVO2 to the complex. Post-translationally, phosphorylated by TOR2; when part of TORC2.

Its subcellular location is the cell membrane. It is found in the vacuole membrane. Essential component of TORC2, which regulates cell cycle-dependent polarization of the actin-cytoskeleton and cell wall integrity. TORC2 controls polarity of the actin cytoskeleton, which is required for orienting the secretory pathway toward discrete growth sites, via the RHO1/PKC1/MAPK cell integrity pathway. TSC11 may exert its functions through two distinct mechanisms, one mediated by AVO1 and the other mediated by AVO2 and SLM1. The polypeptide is Target of rapamycin complex 2 subunit TSC11 (TSC11) (Saccharomyces cerevisiae (strain ATCC 204508 / S288c) (Baker's yeast)).